Consider the following 202-residue polypeptide: P25 protein (202 aa).

The 189-residue stretch at 7–195 (VAIVIYSTYG…EIARIQGETF (189 aa)) folds into the Flavodoxin-like domain. Position 181 is a phosphoserine (S181).

It belongs to the WrbA family. Homodimer.

Unknown. Target of pap1 transcription factor. Confers brefeldin A resistance in S.pombe. The sequence is that of P25 protein (obr1) from Schizosaccharomyces pombe (strain 972 / ATCC 24843) (Fission yeast).